The primary structure comprises 514 residues: ATP synthase subunit alpha (514 aa).

ATP is bound at residue 170-177; that stretch reads GDRQIGKT.

It belongs to the ATPase alpha/beta chains family. As to quaternary structure, F-type ATPases have 2 components, CF(1) - the catalytic core - and CF(0) - the membrane proton channel. CF(1) has five subunits: alpha(3), beta(3), gamma(1), delta(1), epsilon(1). CF(0) has three main subunits: a(1), b(2) and c(9-12). The alpha and beta chains form an alternating ring which encloses part of the gamma chain. CF(1) is attached to CF(0) by a central stalk formed by the gamma and epsilon chains, while a peripheral stalk is formed by the delta and b chains.

The protein localises to the cell inner membrane. The catalysed reaction is ATP + H2O + 4 H(+)(in) = ADP + phosphate + 5 H(+)(out). Produces ATP from ADP in the presence of a proton gradient across the membrane. The alpha chain is a regulatory subunit. The sequence is that of ATP synthase subunit alpha from Pseudomonas putida (strain ATCC 700007 / DSM 6899 / JCM 31910 / BCRC 17059 / LMG 24140 / F1).